We begin with the raw amino-acid sequence, 186 residues long: Methylamine dehydrogenase light chain (186 aa).

A signal peptide (tat-type signal) is located at residues 1 to 57 (MKKNTGFDSGIEKLARKTASKTGRRSFIGKLGGFLVGSALLPLLPVDRRGRMNEAHA). Intrachain disulfides connect Cys78-Cys143, Cys84-Cys116, Cys91-Cys176, Cys93-Cys141, Cys101-Cys132, and Cys133-Cys164. Trp112 is modified (tryptophylquinone). The segment at residues 112–163 (WVASCFNPGDGQTYLIAYRDCCGKQTCGRCNCVNVQGELPVYRPEFNNDIVW) is a cross-link (tryptophan tryptophylquinone (Trp-Trp)).

Belongs to the aromatic amine dehydrogenase light chain family. Heterotetramer of two light and two heavy chains. The cofactor is tryptophan tryptophylquinone residue. Post-translationally, predicted to be exported by the Tat system. The position of the signal peptide cleavage has not been experimentally proven. In terms of processing, tryptophan tryptophylquinone (TTQ) is formed by oxidation of the indole ring of a tryptophan to form tryptophylquinone followed by covalent cross-linking with another tryptophan residue.

The protein resides in the periplasm. The catalysed reaction is 2 oxidized [amicyanin] + methylamine + H2O = 2 reduced [amicyanin] + formaldehyde + NH4(+) + 2 H(+). It participates in one-carbon metabolism; methylamine degradation; formaldehyde from methylamine: step 1/1. In terms of biological role, methylamine dehydrogenase carries out the oxidation of methylamine. Electrons are passed from methylamine dehydrogenase to amicyanin. This Methylobacillus flagellatus (strain ATCC 51484 / DSM 6875 / VKM B-1610 / KT) protein is Methylamine dehydrogenase light chain (mauA).